Consider the following 865-residue polypeptide: Protein translocase subunit SecA (865 aa).

ATP-binding positions include Gln-93, 111 to 115 (GEGKT), and Asp-501. The Zn(2+) site is built by Cys-841, Cys-843, Cys-852, and Cys-853.

The protein belongs to the SecA family. Monomer and homodimer. Part of the essential Sec protein translocation apparatus which comprises SecA, SecYEG and auxiliary proteins SecDF-YajC and YidC. Requires Zn(2+) as cofactor.

It localises to the cell inner membrane. It is found in the cytoplasm. The enzyme catalyses ATP + H2O + cellular proteinSide 1 = ADP + phosphate + cellular proteinSide 2.. In terms of biological role, part of the Sec protein translocase complex. Interacts with the SecYEG preprotein conducting channel. Has a central role in coupling the hydrolysis of ATP to the transfer of proteins into and across the cell membrane, serving as an ATP-driven molecular motor driving the stepwise translocation of polypeptide chains across the membrane. This chain is Protein translocase subunit SecA, found in Helicobacter pylori (strain P12).